Consider the following 347-residue polypeptide: Ryncolin-3 (347 aa).

The first 19 residues, 1–19 (MKPWAAFHLIFLVASSVEG), serve as a signal peptide directing secretion. The region spanning 57-114 (GIPGVPGINGSEGLKGDPGPQGLPGETGFDGIPGVAGPKGDKGDQGDKGDKGDKGDKG) is the Collagen-like domain. Residues 62–115 (PGINGSEGLKGDPGPQGLPGETGFDGIPGVAGPKGDKGDQGDKGDKGDKGDKGD) are disordered. Over residues 95-115 (KGDKGDQGDKGDKGDKGDKGD) the composition is skewed to basic and acidic residues. Residues 121–341 (DCPPTDVEVR…YADMKIRPQQ (221 aa)) form the Fibrinogen C-terminal domain. 2 cysteine pairs are disulfide-bonded: C132-C160 and C284-C297.

It belongs to the ficolin lectin family. Veficolin subfamily. Post-translationally, hydroxylated. In terms of tissue distribution, expressed by the venom duct.

It is found in the secreted. Functionally, initiates complement activation and/or interferes in platelet aggregation and/or blood coagulation. The polypeptide is Ryncolin-3 (Cerberus rynchops (Dog-faced water snake)).